The primary structure comprises 220 residues: Dual specificity phosphatase 29 (220 aa).

In terms of domain architecture, Tyrosine-protein phosphatase spans 54–202 (HVNEVWPKLY…LRELDKQLVQ (149 aa)). Substrate is bound at residue 146 to 153 (HCVMGRSR). The Phosphocysteine intermediate role is filled by C147.

This sequence belongs to the protein-tyrosine phosphatase family. Non-receptor class dual specificity subfamily. In terms of assembly, homodimer. Interacts with PRKAA2.

Its subcellular location is the cytoplasm. It is found in the nucleus. It carries out the reaction O-phospho-L-tyrosyl-[protein] + H2O = L-tyrosyl-[protein] + phosphate. The enzyme catalyses O-phospho-L-seryl-[protein] + H2O = L-seryl-[protein] + phosphate. The catalysed reaction is O-phospho-L-threonyl-[protein] + H2O = L-threonyl-[protein] + phosphate. In terms of biological role, dual specificity phosphatase able to dephosphorylate phosphotyrosine, phosphoserine and phosphothreonine residues within the same substrate, with a preference for phosphotyrosine as a substrate. Involved in the modulation of intracellular signaling cascades. In skeletal muscle regulates systemic glucose homeostasis by activating, AMPK, an energy sensor protein kinase. Affects MAP kinase signaling though modulation of the ERK1/2 cascade in skeletal muscle promoting muscle cell differentiation, development and atrophy. This Pan troglodytes (Chimpanzee) protein is Dual specificity phosphatase 29 (DUSP29).